The primary structure comprises 287 residues: Mitochondrial glycine transporter A (287 aa).

Solcar repeat units lie at residues 7–97 (HPAV…LKQR), 104–188 (PGPL…TKHL), and 198–282 (YAPV…LMAQ). Helical transmembrane passes span 13–38 (FMCG…TRLQ), 72–98 (GVSP…KQRY), 110–135 (VLLG…TRFE), 163–186 (GLMA…SQTK), 202–228 (ANFS…KTHI), and 257–275 (GAVP…AWTV).

The protein belongs to the mitochondrial carrier (TC 2.A.29) family. SLC25A38 subfamily. At 24 hours post-fertilization, expressed predominantly in posterior blood island, posterior cardinal vein and circulating blood, as well as in somites, brain and retina. At 34 hours post-fertilization, becomes restricted to posterior blood island and circulating blood.

Its subcellular location is the mitochondrion inner membrane. It carries out the reaction glycine(in) = glycine(out). Mitochondrial glycine transporter that imports glycine into the mitochondrial matrix. Plays an important role in providing glycine for the first enzymatic step in heme biosynthesis, the condensation of glycine with succinyl-CoA to produce 5-aminolevulinate (ALA) in the mitochondrial matrix. Required during erythropoiesis. Functionally, may play a role as pro-apoptotic protein that induces caspase-dependent apoptosis. The chain is Mitochondrial glycine transporter A (slc25a38a) from Danio rerio (Zebrafish).